A 250-amino-acid chain; its full sequence is Probable 2' cyclic ADP-D-ribose synthase TcpB (250 aa).

The disordered stretch occupies residues 1–46 (MSKEKQAQSKAHKAQQAISSAKSLSTQKSKMSELERATRDGAAIGK). The segment at 1–117 (MSKEKQAQSK…TASATMEAEE (117 aa)) is necessary and sufficient for phosphoinositide binding. A compositionally biased stretch (low complexity) spans 14–23 (AQQAISSAKS). Residues 30 to 39 (KMSELERATR) show a composition bias toward basic and acidic residues. In terms of domain architecture, TIR spans 117 to 250 (EEYDFFISHA…EIAKELHSLI (134 aa)). Glutamate 192 is an active-site residue.

In terms of assembly, homodimer; may also form oligomers. Interacts with host TIRAP. Interacts with host MYD88. Interaction with host MYD88 was not confirmed by another study. Interacts with host TLR4. Abolishes the interaction of host TIRAP with TLR4.

The protein resides in the secreted. It localises to the host cell membrane. The catalysed reaction is NAD(+) + H2O = ADP-D-ribose + nicotinamide + H(+). The enzyme catalyses NAD(+) = 2'cADPR + nicotinamide + H(+). Its function is as follows. Virulence factor that interferes with host Toll-like receptor 2 (TLR2) and TLR4 signaling, resulting in the reduction of dendritic cell maturation, inhibition of pro-inflammatory cytokine secretion and impaired NF-kappa-B activation in macrophages. Interferes with host TLR4 signaling by abolishing host TLR4-TIRAP interaction (but not host TIRAP-MYD88 interaction) and its downstream signaling. Inhibits host TLR 2 induced NF-kappa-B activation and TNF (tumor necrosis factor) secretion. Binds phosphoinositide (PtdIns) via its N-terminal domain. Has NAD(+) hydrolase (NADase) activity, catalyzes cleavage of NAD(+) into ADP-D-ribose (ADPR) and nicotinamide. Also generates a cyclization variant of cyclic ADPR (cADPR), termed v-cADPR (probably 2'cADPR). The sequence is that of Probable 2' cyclic ADP-D-ribose synthase TcpB from Brucella melitensis biotype 1 (strain ATCC 23456 / CCUG 17765 / NCTC 10094 / 16M).